The following is a 1351-amino-acid chain: D-lysergyl-peptide-synthetase subunit 2 (1351 aa).

The segment at 285-684 (RCLSQPTASA…GRKDTQVKLR (400 aa)) is adenylation (A) domain. The Carrier domain maps to 828–904 (APQTTTEKLL…ALACVVRSGK (77 aa)). Residue serine 865 is modified to O-(pantetheine 4'-phosphoryl)serine. The condensation (C) domain stretch occupies residues 941–1340 (EDVYPCTPLQ…LIRDILAVPQ (400 aa)).

Belongs to the NRP synthetase family.

It participates in alkaloid biosynthesis; ergot alkaloid biosynthesis. D-lysergyl-peptide-synthetase subunit 2; part of the gene cluster that mediates the biosynthesis of fungal ergot alkaloid ergovaline, the predominant ergopeptine product in E.festucae var. lolii. DmaW catalyzes the first step of ergot alkaloid biosynthesis by condensing dimethylallyl diphosphate (DMAP) and tryptophan to form 4-dimethylallyl-L-tryptophan. The second step is catalyzed by the methyltransferase easF that methylates 4-dimethylallyl-L-tryptophan in the presence of S-adenosyl-L-methionine, resulting in the formation of 4-dimethylallyl-L-abrine. The catalase easC and the FAD-dependent oxidoreductase easE then transform 4-dimethylallyl-L-abrine to chanoclavine-I which is further oxidized by easD in the presence of NAD(+), resulting in the formation of chanoclavine-I aldehyde. Agroclavine dehydrogenase easG then mediates the conversion of chanoclavine-I aldehyde to agroclavine via a non-enzymatic adduct reaction: the substrate is an iminium intermediate that is formed spontaneously from chanoclavine-I aldehyde in the presence of glutathione. The presence of easA is not required to complete this reaction. Further conversion of agroclavine to paspalic acid is a two-step process involving oxidation of agroclavine to elymoclavine and of elymoclavine to paspalic acid, the second step being performed by the elymoclavine oxidase cloA. Paspalic acid is then further converted to D-lysergic acid. Ergovaline is assembled from D-lysergic acid and three different amino acids by the D-lysergyl-peptide-synthetase composed of a monomudular (lpsB) and a trimodular (lpsA) nonribosomal peptide synthetase subunit. The protein is D-lysergyl-peptide-synthetase subunit 2 of Epichloe festucae var. lolii (Neotyphodium lolii).